Reading from the N-terminus, the 152-residue chain is ATP synthase epsilon chain 2 (152 aa).

The protein belongs to the ATPase epsilon chain family. In terms of assembly, F-type ATPases have 2 components, CF(1) - the catalytic core - and CF(0) - the membrane proton channel. CF(1) has five subunits: alpha(3), beta(3), gamma(1), delta(1), epsilon(1). CF(0) has three main subunits: a, b and c.

It localises to the cell inner membrane. Produces ATP from ADP in the presence of a proton gradient across the membrane. This Burkholderia orbicola (strain AU 1054) protein is ATP synthase epsilon chain 2.